We begin with the raw amino-acid sequence, 1183 residues long: 3-hydroxy-3-methylglutaryl-coenzyme A reductase (1183 aa).

The Cytoplasmic segment spans residues methionine 1–aspartate 245. The 182-residue stretch at aspartate 245–isoleucine 426 folds into the SSD domain. The helical transmembrane segment at isoleucine 246–serine 266 threads the bilayer. Residues methionine 267–lysine 273 lie on the Lumenal side of the membrane. The chain crosses the membrane as a helical span at residues phenylalanine 274–valine 294. At threonine 295–glycine 299 the chain is on the cytoplasmic side. A helical transmembrane segment spans residues valine 300–phenylalanine 320. The Lumenal segment spans residues glutamate 321–aspartate 378. A helical membrane pass occupies residues tyrosine 379–glutamine 399. The Cytoplasmic segment spans residues glutamine 400 to cysteine 402. A helical transmembrane segment spans residues phenylalanine 403–isoleucine 423. The Lumenal segment spans residues leucine 424–lysine 482. The helical transmembrane segment at phenylalanine 483 to proline 503 threads the bilayer. Residues phenylalanine 504–arginine 1183 lie on the Cytoplasmic side of the membrane. Residue glutamate 828 is the Charge relay system of the active site. Serine 834–lysine 840 serves as a coordination point for CoA. Residues serine 895–phenylalanine 897 and aspartate 922–serine 930 each bind NADP(+). The active-site Charge relay system is lysine 962. Valine 991–lysine 993 lines the CoA pocket. Aspartate 1038 acts as the Charge relay system in catalysis. Position 1133–1134 (alanine 1133–histidine 1134) interacts with CoA. The active-site Proton donor is histidine 1134. Residues glutamine 1136 to arginine 1183 form a disordered region. Asparagine 1138–arginine 1139 lines the NADP(+) pocket. Composition is skewed to low complexity over residues arginine 1139–threonine 1148 and serine 1167–alanine 1177.

This sequence belongs to the HMG-CoA reductase family.

It localises to the endoplasmic reticulum membrane. The enzyme catalyses (R)-mevalonate + 2 NADP(+) + CoA = (3S)-3-hydroxy-3-methylglutaryl-CoA + 2 NADPH + 2 H(+). It participates in metabolic intermediate biosynthesis; (R)-mevalonate biosynthesis; (R)-mevalonate from acetyl-CoA: step 3/3. In terms of biological role, HMG-CoA reductase; part of the first module of ergosterol biosynthesis pathway that includes the early steps of the pathway, conserved across all eukaryotes, and which results in the formation of mevalonate from acetyl-coenzyme A (acetyl-CoA). In this module, the cytosolic acetyl-CoA acetyltransferase catalyzes the formation of acetoacetyl-CoA. The hydroxymethylglutaryl-CoA synthase then condenses acetyl-CoA with acetoacetyl-CoA to form HMG-CoA. The rate-limiting step of the early module is the reduction to mevalonate by the 3-hydroxy-3-methylglutaryl-coenzyme A (HMG-CoA) reductase HMGR. The chain is 3-hydroxy-3-methylglutaryl-coenzyme A reductase (HMGR) from Gibberella fujikuroi (strain CBS 195.34 / IMI 58289 / NRRL A-6831) (Bakanae and foot rot disease fungus).